Consider the following 430-residue polypeptide: mRNA cap guanine-N(7) methyltransferase (430 aa).

Residues Met1–Gln88 form a disordered region. A compositionally biased stretch (basic and acidic residues) spans Gln15 to Asp37. Residues Ser136–Val419 enclose the mRNA cap 0 methyltransferase domain. Residue Asn145 to Asn146 participates in mRNA binding. S-adenosyl-L-methionine is bound by residues Lys149, Gly167, Asp189, Asp218, Gln244, and Tyr249.

It belongs to the class I-like SAM-binding methyltransferase superfamily. mRNA cap 0 methyltransferase family.

Its subcellular location is the nucleus. The catalysed reaction is a 5'-end (5'-triphosphoguanosine)-ribonucleoside in mRNA + S-adenosyl-L-methionine = a 5'-end (N(7)-methyl 5'-triphosphoguanosine)-ribonucleoside in mRNA + S-adenosyl-L-homocysteine. Its function is as follows. Responsible for methylating the 5'-cap structure of mRNAs. The polypeptide is mRNA cap guanine-N(7) methyltransferase (ABD1) (Eremothecium gossypii (strain ATCC 10895 / CBS 109.51 / FGSC 9923 / NRRL Y-1056) (Yeast)).